Here is a 260-residue protein sequence, read N- to C-terminus: FAS1 domain-containing protein SELMODRAFT_448915 (260 aa).

The Cytoplasmic portion of the chain corresponds to 1–35; it reads MRRTGRSYKPLLSQLKDHHIPVHPSSRAERAMESR. Residues 36–58 traverse the membrane as a helical segment; sequence TLLVLLFVGVVTIVSSGLERAAA. The region spanning 59 to 198 is the FAS1 domain; it reads QDDTDDGILP…IACHGIDRVL (140 aa). At 59 to 260 the chain is on the extracellular side; sequence QDDTDDGILP…SSASRYPVSE (202 aa). N118, N169, N176, N201, N236, and N247 each carry an N-linked (GlcNAc...) asparagine glycan. The segment at 210 to 260 is disordered; sequence PEASPPFGAEQASPAPEALPPGTRSPNNTANPSNRKSNSTRSSASRYPVSE. The segment covering 233 to 254 has biased composition (polar residues); the sequence is RSPNNTANPSNRKSNSTRSSAS.

The protein localises to the membrane. The chain is FAS1 domain-containing protein SELMODRAFT_448915 from Selaginella moellendorffii (Spikemoss).